Here is a 234-residue protein sequence, read N- to C-terminus: Ribose-5-phosphate isomerase A (234 aa).

Residues 39–42 (TGST), 92–95 (DGAD), and 105–108 (KGGG) each bind substrate. The Proton acceptor role is filled by E114. K132 is a binding site for substrate.

This sequence belongs to the ribose 5-phosphate isomerase family. Homodimer.

The enzyme catalyses aldehydo-D-ribose 5-phosphate = D-ribulose 5-phosphate. It participates in carbohydrate degradation; pentose phosphate pathway; D-ribose 5-phosphate from D-ribulose 5-phosphate (non-oxidative stage): step 1/1. Its function is as follows. Catalyzes the reversible conversion of ribose-5-phosphate to ribulose 5-phosphate. The protein is Ribose-5-phosphate isomerase A of Albidiferax ferrireducens (strain ATCC BAA-621 / DSM 15236 / T118) (Rhodoferax ferrireducens).